The following is a 266-amino-acid chain: UPF0294 protein YafD (266 aa).

The protein belongs to the UPF0294 family.

Its subcellular location is the cytoplasm. The polypeptide is UPF0294 protein YafD (Salmonella agona (strain SL483)).